A 395-amino-acid polypeptide reads, in one-letter code: Na(+)/H(+) antiporter NhaA (395 aa).

11 helical membrane-spanning segments follow: residues 11 to 31 (FAME…ALII), 61 to 81 (LLLW…GLEV), 96 to 116 (IVLP…IYWF), 127 to 147 (GWAI…ALLG), 156 to 176 (LFLM…IAIF), 179 to 199 (GTLS…LVAM), 202 to 222 (MGVV…VCVL), 264 to 284 (FGIL…GVTL), 295 to 315 (IAVG…WMAV), 331 to 351 (VLGV…VGSL), and 366 to 386 (MGIL…TAAA).

This sequence belongs to the NhaA Na(+)/H(+) (TC 2.A.33) antiporter family.

It localises to the cell inner membrane. The enzyme catalyses Na(+)(in) + 2 H(+)(out) = Na(+)(out) + 2 H(+)(in). Functionally, na(+)/H(+) antiporter that extrudes sodium in exchange for external protons. This Pseudomonas fluorescens (strain ATCC BAA-477 / NRRL B-23932 / Pf-5) protein is Na(+)/H(+) antiporter NhaA.